A 412-amino-acid chain; its full sequence is Gamma-glutamyl phosphate reductase (412 aa).

The protein belongs to the gamma-glutamyl phosphate reductase family.

It localises to the cytoplasm. It carries out the reaction L-glutamate 5-semialdehyde + phosphate + NADP(+) = L-glutamyl 5-phosphate + NADPH + H(+). The protein operates within amino-acid biosynthesis; L-proline biosynthesis; L-glutamate 5-semialdehyde from L-glutamate: step 2/2. Its function is as follows. Catalyzes the NADPH-dependent reduction of L-glutamate 5-phosphate into L-glutamate 5-semialdehyde and phosphate. The product spontaneously undergoes cyclization to form 1-pyrroline-5-carboxylate. This is Gamma-glutamyl phosphate reductase from Actinobacillus pleuropneumoniae serotype 3 (strain JL03).